Consider the following 98-residue polypeptide: Defensin-A (98 aa).

The signal sequence occupies residues 1–18 (MKSITVICFLALCTVAIT). A propeptide spanning residues 19–58 (SAYPQEPVLADEARPFANSLFDELPEETYQAAVENFRLKR) is cleaved from the precursor. 3 cysteine pairs are disulfide-bonded: Cys61–Cys88, Cys74–Cys94, and Cys78–Cys96.

Belongs to the invertebrate defensin family. Type 1 subfamily.

It is found in the secreted. Functionally, antibacterial peptide mostly active against Gram-positive bacteria. Has activity against the bacteria Gram-negative E.cloacae beta12. This chain is Defensin-A (DEFA), found in Aedes aegypti (Yellowfever mosquito).